A 226-amino-acid polypeptide reads, in one-letter code: ATP synthase F(0) complex subunit a (226 aa).

6 consecutive transmembrane segments (helical) span residues 6–26, 68–88, 97–117, 138–158, 164–184, and 189–209; these read FASF…IILF, WSLM…LGLL, QLSM…VMGF, IPML…ALAV, ITAG…LSTI, and ALII…VALI.

The protein belongs to the ATPase A chain family. In terms of assembly, component of the ATP synthase complex composed at least of ATP5F1A/subunit alpha, ATP5F1B/subunit beta, ATP5MC1/subunit c (homooctomer), MT-ATP6/subunit a, MT-ATP8/subunit 8, ATP5ME/subunit e, ATP5MF/subunit f, ATP5MG/subunit g, ATP5MK/subunit k, ATP5MJ/subunit j, ATP5F1C/subunit gamma, ATP5F1D/subunit delta, ATP5F1E/subunit epsilon, ATP5PF/subunit F6, ATP5PB/subunit b, ATP5PD/subunit d, ATP5PO/subunit OSCP. ATP synthase complex consists of a soluble F(1) head domain (subunits alpha(3) and beta(3)) - the catalytic core - and a membrane F(0) domain - the membrane proton channel (subunits c, a, 8, e, f, g, k and j). These two domains are linked by a central stalk (subunits gamma, delta, and epsilon) rotating inside the F1 region and a stationary peripheral stalk (subunits F6, b, d, and OSCP). Interacts with DNAJC30; interaction is direct.

It is found in the mitochondrion inner membrane. It catalyses the reaction H(+)(in) = H(+)(out). Its function is as follows. Subunit a, of the mitochondrial membrane ATP synthase complex (F(1)F(0) ATP synthase or Complex V) that produces ATP from ADP in the presence of a proton gradient across the membrane which is generated by electron transport complexes of the respiratory chain. ATP synthase complex consist of a soluble F(1) head domain - the catalytic core - and a membrane F(1) domain - the membrane proton channel. These two domains are linked by a central stalk rotating inside the F(1) region and a stationary peripheral stalk. During catalysis, ATP synthesis in the catalytic domain of F(1) is coupled via a rotary mechanism of the central stalk subunits to proton translocation. With the subunit c (ATP5MC1), forms the proton-conducting channel in the F(0) domain, that contains two crucial half-channels (inlet and outlet) that facilitate proton movement from the mitochondrial intermembrane space (IMS) into the matrix. Protons are taken up via the inlet half-channel and released through the outlet half-channel, following a Grotthuss mechanism. In Pan troglodytes (Chimpanzee), this protein is ATP synthase F(0) complex subunit a.